The primary structure comprises 319 residues: Olfactory receptor 8U3 (319 aa).

Over 1 to 25 the chain is Extracellular; sequence MAEVNISYVSEFILKGITDRPELQA. Asn5 carries N-linked (GlcNAc...) asparagine glycosylation. A helical transmembrane segment spans residues 26–46; sequence PCFVMFLTIYLVTVLGNLGLI. Over 47–54 the chain is Cytoplasmic; sequence VIIRVDSR. A helical membrane pass occupies residues 55–75; it reads LHTPMYFFLSHLAFVDLCYSS. At 76–99 the chain is on the extracellular side; sequence AITPKMMVNFVVERNTIPFHACAT. Cys97 and Cys189 are joined by a disulfide. A helical membrane pass occupies residues 100-120; the sequence is QLGCFLTFMITECFLLASMAY. The Cytoplasmic segment spans residues 121–133; the sequence is DRYVAICSPLHYS. The helical transmembrane segment at 134 to 154 threads the bilayer; sequence TLMSKRVCIQLVAVPYVYSFL. At 155–196 the chain is on the extracellular side; sequence VALFHTIITFRLTYCGPNVINHFYCDDLPLLALSCSDTHMKE. Residues 197–217 traverse the membrane as a helical segment; it reads ILIFAFAGFDMICSSSIVLTS. At 218–237 the chain is on the cytoplasmic side; the sequence is YLFIIAAILRIRSTQGRRKA. The chain crosses the membrane as a helical span at residues 238–258; it reads ISTCGSHMVAVTIFYGTLIFM. Topologically, residues 259 to 271 are extracellular; that stretch reads YLQPKSNHSLDTD. Asn265 carries N-linked (GlcNAc...) asparagine glycosylation. The helical transmembrane segment at 272-292 threads the bilayer; the sequence is KMASVFYTVVIPMLNPLIYSL. Over 293 to 319 the chain is Cytoplasmic; sequence RNKEVKDASKKALDKGYETLKILRLSK.

The protein belongs to the G-protein coupled receptor 1 family.

It is found in the cell membrane. In terms of biological role, potential odorant receptor. In Mus musculus (Mouse), this protein is Olfactory receptor 8U3.